The primary structure comprises 218 residues: MRNENTPIAVEGYPFIAIAGVLTLILAAVSWHAPVVWAGTAFFLTVTLFVAFFFRNPERITPGNENAVVAPADGVVIYLGPAREEHLGVETTKISIFMSVFNVHINRAPVSGTVLDTFYVKGKFLDVRDDRATFENEQAGLVIETARGLRLAVVQVAGLIARRIVCYAGKGDRLTRGGRYGLIRFGSRLDIYLPTTTEVKVALGEKTVAGETVLGILP.

Residue S187 is the Schiff-base intermediate with substrate; via pyruvic acid of the active site. S187 carries the pyruvic acid (Ser); by autocatalysis modification.

This sequence belongs to the phosphatidylserine decarboxylase family. PSD-A subfamily. Heterodimer of a large membrane-associated beta subunit and a small pyruvoyl-containing alpha subunit. Requires pyruvate as cofactor. Post-translationally, is synthesized initially as an inactive proenzyme. Formation of the active enzyme involves a self-maturation process in which the active site pyruvoyl group is generated from an internal serine residue via an autocatalytic post-translational modification. Two non-identical subunits are generated from the proenzyme in this reaction, and the pyruvate is formed at the N-terminus of the alpha chain, which is derived from the carboxyl end of the proenzyme. The post-translation cleavage follows an unusual pathway, termed non-hydrolytic serinolysis, in which the side chain hydroxyl group of the serine supplies its oxygen atom to form the C-terminus of the beta chain, while the remainder of the serine residue undergoes an oxidative deamination to produce ammonia and the pyruvoyl prosthetic group on the alpha chain.

It is found in the cell membrane. The enzyme catalyses a 1,2-diacyl-sn-glycero-3-phospho-L-serine + H(+) = a 1,2-diacyl-sn-glycero-3-phosphoethanolamine + CO2. Its pathway is phospholipid metabolism; phosphatidylethanolamine biosynthesis; phosphatidylethanolamine from CDP-diacylglycerol: step 2/2. Functionally, catalyzes the formation of phosphatidylethanolamine (PtdEtn) from phosphatidylserine (PtdSer). The polypeptide is Phosphatidylserine decarboxylase proenzyme (Geobacter sulfurreducens (strain ATCC 51573 / DSM 12127 / PCA)).